The following is a 553-amino-acid chain: Protein spartin (553 aa).

Positions 15–96 constitute an MIT domain; the sequence is IRTAYKAAMT…ETELRYRLKV (82 aa). Residues 105–130 are disordered; the sequence is DDSAVEATEESRAEMDTKRPPLLAEN. Over residues 113–123 the composition is skewed to basic and acidic residues; it reads EESRAEMDTKR. A Senescence domain is found at 325–509; it reads IVSAADFIAS…SQNVNYITPK (185 aa).

Interacts with Eps-15 (via C-terminal region); the interaction is required for spartin localization to the NMJ presynaptic membrane. As to expression, expressed in larval brain, ventral nerve cord and neuropil (at protein level).

Its subcellular location is the presynaptic cell membrane. It localises to the early endosome. The protein localises to the lipid droplet. In terms of biological role, during postembryonic development, functions with endocytic adapter Eps-15 in neurons to restrain synaptic growth, by inhibiting BMP signaling, and to control synaptic endocytosis. Required presynaptically for neuromuscular junction (NMJ) neurotransmission. Inhibits neuronal BMP signaling by promoting endocytic internalization and subsequent endosomal trafficking of the BMP receptor wit. In this way, regulates the Fmr1 translational regulator controlling Futsch expression to modulate neuronal microtubule stability, which controls both synaptogenesis and neuronal survival. This Drosophila melanogaster (Fruit fly) protein is Protein spartin.